The sequence spans 274 residues: Large ribosomal subunit protein uL2 (274 aa).

The tract at residues Val223–Tyr256 is disordered. Basic and acidic residues predominate over residues Asp229–Val246.

The protein belongs to the universal ribosomal protein uL2 family. Part of the 50S ribosomal subunit. Forms a bridge to the 30S subunit in the 70S ribosome.

One of the primary rRNA binding proteins. Required for association of the 30S and 50S subunits to form the 70S ribosome, for tRNA binding and peptide bond formation. It has been suggested to have peptidyltransferase activity; this is somewhat controversial. Makes several contacts with the 16S rRNA in the 70S ribosome. The polypeptide is Large ribosomal subunit protein uL2 (Albidiferax ferrireducens (strain ATCC BAA-621 / DSM 15236 / T118) (Rhodoferax ferrireducens)).